Here is a 248-residue protein sequence, read N- to C-terminus: 3-deoxy-manno-octulosonate cytidylyltransferase (248 aa).

Belongs to the KdsB family.

The protein localises to the cytoplasm. The catalysed reaction is 3-deoxy-alpha-D-manno-oct-2-ulosonate + CTP = CMP-3-deoxy-beta-D-manno-octulosonate + diphosphate. It participates in nucleotide-sugar biosynthesis; CMP-3-deoxy-D-manno-octulosonate biosynthesis; CMP-3-deoxy-D-manno-octulosonate from 3-deoxy-D-manno-octulosonate and CTP: step 1/1. It functions in the pathway bacterial outer membrane biogenesis; lipopolysaccharide biosynthesis. In terms of biological role, activates KDO (a required 8-carbon sugar) for incorporation into bacterial lipopolysaccharide in Gram-negative bacteria. In Leptospira interrogans serogroup Icterohaemorrhagiae serovar copenhageni (strain Fiocruz L1-130), this protein is 3-deoxy-manno-octulosonate cytidylyltransferase.